The chain runs to 50 residues: U3-ctenitoxin-Asp1a (50 aa).

Expressed by the venom gland.

Its subcellular location is the secreted. Possible neurotoxin. This Ancylometes sp. (South American fishing spider) protein is U3-ctenitoxin-Asp1a.